We begin with the raw amino-acid sequence, 501 residues long: Amidophosphoribosyltransferase (501 aa).

Residue cysteine 2 is the Nucleophile of the active site. Residues 2 to 234 form the Glutamine amidotransferase type-2 domain; sequence CGIVGIVGKS…PGEAVYITEE (233 aa). Mg(2+) is bound by residues threonine 303, aspartate 365, and aspartate 366.

In the C-terminal section; belongs to the purine/pyrimidine phosphoribosyltransferase family. The cofactor is Mg(2+).

It carries out the reaction 5-phospho-beta-D-ribosylamine + L-glutamate + diphosphate = 5-phospho-alpha-D-ribose 1-diphosphate + L-glutamine + H2O. It functions in the pathway purine metabolism; IMP biosynthesis via de novo pathway; N(1)-(5-phospho-D-ribosyl)glycinamide from 5-phospho-alpha-D-ribose 1-diphosphate: step 1/2. Its function is as follows. Catalyzes the formation of phosphoribosylamine from phosphoribosylpyrophosphate (PRPP) and glutamine. The protein is Amidophosphoribosyltransferase of Pseudomonas aeruginosa (strain ATCC 15692 / DSM 22644 / CIP 104116 / JCM 14847 / LMG 12228 / 1C / PRS 101 / PAO1).